The chain runs to 102 residues: Small ribosomal subunit protein uS10 (102 aa).

The protein belongs to the universal ribosomal protein uS10 family. As to quaternary structure, part of the 30S ribosomal subunit.

In terms of biological role, involved in the binding of tRNA to the ribosomes. The protein is Small ribosomal subunit protein uS10 of Levilactobacillus brevis (strain ATCC 367 / BCRC 12310 / CIP 105137 / JCM 1170 / LMG 11437 / NCIMB 947 / NCTC 947) (Lactobacillus brevis).